Here is a 360-residue protein sequence, read N- to C-terminus: NAD(P)H-quinone oxidoreductase subunit 1, chloroplastic (360 aa).

The next 9 helical transmembrane spans lie at 27–47 (IWIF…VLVI), 98–118 (FSIG…VIPF), 129–149 (IGIF…LMSG), 165–185 (AAQS…ISLL), 203–223 (FWGW…ISSL), 248–268 (YSGI…LISS), 269–289 (LFVT…ISIL), 297–317 (IFGT…FLFI), and 340–360 (FLLP…LFSL).

It belongs to the complex I subunit 1 family. NDH is composed of at least 16 different subunits, 5 of which are encoded in the nucleus.

Its subcellular location is the plastid. It is found in the chloroplast thylakoid membrane. The catalysed reaction is a plastoquinone + NADH + (n+1) H(+)(in) = a plastoquinol + NAD(+) + n H(+)(out). It carries out the reaction a plastoquinone + NADPH + (n+1) H(+)(in) = a plastoquinol + NADP(+) + n H(+)(out). Its function is as follows. NDH shuttles electrons from NAD(P)H:plastoquinone, via FMN and iron-sulfur (Fe-S) centers, to quinones in the photosynthetic chain and possibly in a chloroplast respiratory chain. The immediate electron acceptor for the enzyme in this species is believed to be plastoquinone. Couples the redox reaction to proton translocation, and thus conserves the redox energy in a proton gradient. This Nasturtium officinale (Watercress) protein is NAD(P)H-quinone oxidoreductase subunit 1, chloroplastic.